A 289-amino-acid polypeptide reads, in one-letter code: MSASVRTYLEIMRYENCLMAGFAAIIGTLIAFNILTSNAPSSYSPGEFPLFSSVLIFLAVFLVAGAGNAINDYFDVRIDSINRPDRPIPSGRMKLKEALYFSYTLFALGTLLAFSINPICGVIALFNSLVLIFYAKTLKGTPLLGNLSIGYLTGSSFLFGASVFGLEGLKALFVLFLLAALAITAREIVKDIEDMEGDKMEGADTLPLRVGAKKASYLAALIGFLAVIFSPLPYHLSMLGLRYLYLVLLADLGFLAAIYQLLARNNPTKSSKMFKIAMFFALIAFIAGV.

8 helical membrane passes run 17–37 (CLMAGFAAIIGTLIAFNILTS), 50–70 (LFSSVLIFLAVFLVAGAGNAI), 106–126 (FALGTLLAFSINPICGVIALF), 141–161 (TPLLGNLSIGYLTGSSFLFGA), 163–183 (VFGLEGLKALFVLFLLAALAI), 221–241 (LIGFLAVIFSPLPYHLSMLGL), 243–263 (YLYLVLLADLGFLAAIYQLLA), and 269–289 (KSSKMFKIAMFFALIAFIAGV).

It belongs to the UbiA prenyltransferase family. DGGGP synthase subfamily. It depends on Mg(2+) as a cofactor.

It is found in the cell membrane. It catalyses the reaction sn-3-O-(geranylgeranyl)glycerol 1-phosphate + (2E,6E,10E)-geranylgeranyl diphosphate = 2,3-bis-O-(geranylgeranyl)-sn-glycerol 1-phosphate + diphosphate. It participates in membrane lipid metabolism; glycerophospholipid metabolism. Its function is as follows. Prenyltransferase that catalyzes the transfer of the geranylgeranyl moiety of geranylgeranyl diphosphate (GGPP) to the C2 hydroxyl of (S)-3-O-geranylgeranylglyceryl phosphate (GGGP). This reaction is the second ether-bond-formation step in the biosynthesis of archaeal membrane lipids. The polypeptide is Digeranylgeranylglyceryl phosphate synthase (Methanosarcina barkeri (strain Fusaro / DSM 804)).